A 689-amino-acid chain; its full sequence is MIKRKIWCNLCIDLVAFTSEIFKGAVFQSLDGIVVSANCKLRKIFTLKSKPQDTADKDAVCGVPFSTDEPTDIIPRSCQLMTDVPHVTQLLNMTKLRQTEIKFGGHPLRSAESDQFINRGTGSTRNSKNQDVCHIAFGSKVLGPPPLSGRRSNMRISSETVRSVGSKNNRSCQPSTVEKHVNGTEMSALLIPESEEQGNKENIHHIKQTVPIHAANLPIMHPHPPQEPSADKNNNRRRLRLKSTSRERTETPSGNSSGNNTNEVKAATVLTTVSQQEAGLLNSSTLGPQSPDQSDEWIFPENADHVSYLASSRQSLLLDDDSCHPSHLWLEASKESEHDQQAEESQSVPKDIFTFSSRPRSAPHGKTQTMSPEEVSFILDLKEDNSVTSRDTQSEDDFYGGDSSEEGDHSIQGSRGPTTGPSELTQLTSESLLGEAAKRTSKEYLKSAYTEAGATESQDSSAEQIDRNNFQMSSLPTTCFSPTGRRCGSCQKTPDPVIKAKDLPAQQVPASLNKTSLKEISGERLSSIPEASEYDWRNYQPSQMSESELQMLASLRRQQNEELEDAGTSHGLSASQVDNCNVSISTSSDDTTTWNSCLPPPVNQGHHYQKEMNPPSPSNPRDWLNMLSPPIVPPSQQPAEQRPDSSESLSVQGEEDLSVEEDEEVLTLLYDPCLDCYFDPQTGKYYELV.

5 disordered regions span residues 143 to 179, 217 to 236, 241 to 262, 333 to 424, and 583 to 660; these read GPPPLSGRRSNMRISSETVRSVGSKNNRSCQPSTVEK, LPIMHPHPPQEPSADKNNNR, LKSTSRERTETPSGNSSGNNTN, SKES…PSEL, and SIST…LSVE. A compositionally biased stretch (polar residues) spans 150-176; the sequence is RRSNMRISSETVRSVGSKNNRSCQPST. Residues 343–359 are compositionally biased toward polar residues; sequence EESQSVPKDIFTFSSRP. Residues 394–405 show a composition bias toward acidic residues; that stretch reads SEDDFYGGDSSE. Residues 411–421 are compositionally biased toward polar residues; sequence IQGSRGPTTGP. Residues 583–593 are compositionally biased toward low complexity; the sequence is SISTSSDDTTT.

The polypeptide is Protein CFAP20DC (CFAP20DC) (Macaca fascicularis (Crab-eating macaque)).